The following is a 629-amino-acid chain: tRNA uridine 5-carboxymethylaminomethyl modification enzyme MnmG (629 aa).

FAD-binding positions include 13 to 18 (GGGHAG), valine 125, and serine 180. Position 273–287 (273–287 (GPRYCPSIEDKVMRF)) interacts with NAD(+). Glutamine 370 contributes to the FAD binding site.

This sequence belongs to the MnmG family. Homodimer. Heterotetramer of two MnmE and two MnmG subunits. Requires FAD as cofactor.

It is found in the cytoplasm. NAD-binding protein involved in the addition of a carboxymethylaminomethyl (cmnm) group at the wobble position (U34) of certain tRNAs, forming tRNA-cmnm(5)s(2)U34. The polypeptide is tRNA uridine 5-carboxymethylaminomethyl modification enzyme MnmG (Escherichia coli O127:H6 (strain E2348/69 / EPEC)).